The primary structure comprises 498 residues: Glycerol kinase (498 aa).

Thr12 lines the ADP pocket. Positions 12, 13, and 14 each coordinate ATP. Thr12 serves as a coordination point for sn-glycerol 3-phosphate. Residue Arg16 participates in ADP binding. Arg82, Glu83, Tyr134, and Asp243 together coordinate sn-glycerol 3-phosphate. Positions 82, 83, 134, 243, and 244 each coordinate glycerol. Thr265 and Gly308 together coordinate ADP. Residues Thr265, Gly308, Gln312, and Gly409 each coordinate ATP. Residues Gly409 and Asn413 each coordinate ADP.

Belongs to the FGGY kinase family. As to quaternary structure, homotetramer and homodimer (in equilibrium).

It carries out the reaction glycerol + ATP = sn-glycerol 3-phosphate + ADP + H(+). It functions in the pathway polyol metabolism; glycerol degradation via glycerol kinase pathway; sn-glycerol 3-phosphate from glycerol: step 1/1. With respect to regulation, activated by phosphorylation and inhibited by fructose 1,6-bisphosphate (FBP). Functionally, key enzyme in the regulation of glycerol uptake and metabolism. Catalyzes the phosphorylation of glycerol to yield sn-glycerol 3-phosphate. The polypeptide is Glycerol kinase (Clostridium botulinum (strain Okra / Type B1)).